Here is a 286-residue protein sequence, read N- to C-terminus: MTVIDEIYSSSSAIPTVALNDEAKMPVLGLGVAKLSDEETESSVLAALEAGCRLIDTAASYGNEAAVGRAIAASGIPREELFVTTKLGTSRQGFHSAQESCKESLDRLGLDYLDLYLIHWPAPKLGKYVESFEGMIEARERGHVRSIGVSNFTEDLLATVIEETDEVPAVNQVELHPRLNQAELRQVHAQHDVTTQSYSPLGVGRLIEEPTVTTIAAEYGRTPAQVLVRWNLQLDNVVVSRSSKPERVAENLDVFDFTLEPEHMEAIEGLHDGTRVLHDPMTFMGT.

Tyr-61 serves as the catalytic Proton donor. 7 residues coordinate NADPH: Leu-201, Val-203, Val-239, Arg-241, Ser-242, Arg-247, and Asn-251.

Belongs to the aldo/keto reductase family.

The sequence is that of Aldo-keto reductase MAV_4483 from Mycobacterium avium (strain 104).